Here is a 363-residue protein sequence, read N- to C-terminus: Transcriptional regulator AacuR (363 aa).

The tract at residues 1–24 is disordered; it reads MTSLQCPPPDRTRRSLSPTGPKFR. The segment at residues 27-54 is a DNA-binding region (zn(2)-C6 fungal-type); that stretch reads CKSCAASKIRCTKEKPQCARCVKRNMVC. A compositionally biased stretch (basic residues) spans 63 to 72; it reads RRKPGARLKH. The interval 63–104 is disordered; sequence RRKPGARLKHRESITTNAHHSPTTTTITTSRTTSSSPSASPK. Residues 76 to 102 show a composition bias toward low complexity; sequence ITTNAHHSPTTTTITTSRTTSSSPSAS.

The protein resides in the nucleus. Its function is as follows. Transcriptional regulator; part of the gene cluster that mediates the biosynthesis of the tetrahydroxanthone dimer secalonic acid D. The polypeptide is Transcriptional regulator AacuR (Aspergillus aculeatus (strain ATCC 16872 / CBS 172.66 / WB 5094)).